The following is an 842-amino-acid chain: Glucans biosynthesis glucosyltransferase H (842 aa).

The next 8 membrane-spanning stretches (helical) occupy residues 140–160, 194–214, 513–533, 568–588, 600–620, 622–642, 656–676, and 680–700; these read ILLLLTLSQTVVATWYMKTIL, ILILFAVLFCWVSAGFWTALM, VFLTGVMSYLSAPLWFMFLAL, IALFASTMVLLFLPKLLSIIL, FIRVTLSLLLEVLFSVLLAPV, MLFHTVFVVSAFLGWEVVWNS, FMRHGSQLLLGLVWAVGMAWL, and FLFWLAPIVVSLILSPFVSAI.

It belongs to the glycosyltransferase 2 family. OpgH subfamily.

It is found in the cell inner membrane. It participates in glycan metabolism; osmoregulated periplasmic glucan (OPG) biosynthesis. In terms of biological role, involved in the biosynthesis of osmoregulated periplasmic glucans (OPGs). This Klebsiella pneumoniae (strain 342) protein is Glucans biosynthesis glucosyltransferase H.